The following is a 145-amino-acid chain: Extracellular globin-2 (145 aa).

The Globin domain occupies 3–145 (QCGVLEGLKV…HIEDGIKGHH (143 aa)). Cysteines 4 and 133 form a disulfide. His-96 provides a ligand contact to heme b.

Belongs to the globin family. As to quaternary structure, the extracellular hemoglobin of the earthworm consists of 12 subunits that have a hexagonal bilayer structure with a molecular weight near 3.8 million. Each one-twelfth subunit is composed primarily of disulfide linked trimers (chains A, B, and C) and monomers (chain D).

The polypeptide is Extracellular globin-2 (Lumbricus terrestris (Common earthworm)).